The sequence spans 551 residues: Chaperonin GroEL (551 aa).

ATP-binding positions include 30-33 (TLGP), Lys-51, 87-91 (DGTTT), Gly-415, 479-481 (NAA), and Asp-495. Residues 523–551 (DSPKEDKSSDMPSPSAGGMGGMGGMGGMM) are disordered. The span at 539–551 (GGMGGMGGMGGMM) shows a compositional bias: gly residues.

The protein belongs to the chaperonin (HSP60) family. Forms a cylinder of 14 subunits composed of two heptameric rings stacked back-to-back. Interacts with the co-chaperonin GroES.

It is found in the cytoplasm. It catalyses the reaction ATP + H2O + a folded polypeptide = ADP + phosphate + an unfolded polypeptide.. Together with its co-chaperonin GroES, plays an essential role in assisting protein folding. The GroEL-GroES system forms a nano-cage that allows encapsulation of the non-native substrate proteins and provides a physical environment optimized to promote and accelerate protein folding. In Buchnera aphidicola subsp. Chaetophorus leucomelas, this protein is Chaperonin GroEL.